A 250-amino-acid polypeptide reads, in one-letter code: Cobalt transport protein CbiM (250 aa).

Positions 1–24 (MKYWGTALLGAFCVFFFTPNTAYA) are cleaved as a signal peptide. 6 consecutive transmembrane segments (helical) span residues 32–52 (LPAG…FWGI), 67–87 (MLLG…IPSV), 99–119 (LGAI…VLLF), 122–142 (LLLA…MGVM), 161–181 (VAVF…TSLQ), and 203–223 (IFAI…VFVF).

This sequence belongs to the CbiM family. As to quaternary structure, forms an energy-coupling factor (ECF) transporter complex composed of an ATP-binding protein (A component, CbiO), a transmembrane protein (T component, CbiQ) and 2 possible substrate-capture proteins (S components, CbiM and CbiN) of unknown stoichimetry.

The protein localises to the cell membrane. Its pathway is cofactor biosynthesis; adenosylcobalamin biosynthesis. Part of the energy-coupling factor (ECF) transporter complex CbiMNOQ involved in cobalt import. This chain is Cobalt transport protein CbiM, found in Desulforamulus reducens (strain ATCC BAA-1160 / DSM 100696 / MI-1) (Desulfotomaculum reducens).